A 142-amino-acid chain; its full sequence is MPTPSMEDYIEKIYSLIETKGYARVSDIADELFVHPSSVTKMVQKLDKDEYLIYEKYRGLILTPKGTQMGKRLLERHALLESFLSIIGVDPSHIYHDVEGIEHHLSWNSIDRIGDVVQFFENHPDALKTLKEMDPTKPDTKE.

Residues 1–63 form the HTH dtxR-type domain; it reads MPTPSMEDYI…YEKYRGLILT (63 aa). Asp-8, Glu-11, His-77, Glu-99, Glu-102, and His-103 together coordinate Mn(2+).

Belongs to the DtxR/MntR family. As to quaternary structure, homodimer.

Its subcellular location is the cytoplasm. With respect to regulation, DNA binding is strongly activated by Mn(2+). In terms of biological role, central regulator of manganese homeostasis. The sequence is that of HTH-type transcriptional regulator MntR from Listeria innocua serovar 6a (strain ATCC BAA-680 / CLIP 11262).